The chain runs to 218 residues: Glutathione S-transferase (218 aa).

One can recognise a GST N-terminal domain in the interval 2–88; it reads PVTLGYWDIR…YIARKHDLCG (87 aa). Residues 7-8, 46-50, 59-60, and 72-73 each bind glutathione; these read YW, WLNEK, NL, and QS. A GST C-terminal domain is found at 90-208; the sequence is TEEERIQLDI…KSSRFSCKQI (119 aa). Residue tyrosine 116 coordinates substrate.

The protein belongs to the GST superfamily. Mu family. In terms of assembly, homodimer.

It localises to the cytoplasm. The enzyme catalyses RX + glutathione = an S-substituted glutathione + a halide anion + H(+). Functionally, conjugation of reduced glutathione to a wide number of exogenous and endogenous hydrophobic electrophiles. The polypeptide is Glutathione S-transferase (Mesocricetus auratus (Golden hamster)).